The sequence spans 264 residues: Phosphate import ATP-binding protein PstB 1 (264 aa).

In terms of domain architecture, ABC transporter spans 20–259 (LETRDLNIFY…PKIKLTEDYI (240 aa)). 52 to 59 (GASGSGKS) contributes to the ATP binding site.

The protein belongs to the ABC transporter superfamily. Phosphate importer (TC 3.A.1.7) family. In terms of assembly, the complex is composed of two ATP-binding proteins (PstB), two transmembrane proteins (PstC and PstA) and a solute-binding protein (PstS).

It is found in the cell membrane. The enzyme catalyses phosphate(out) + ATP + H2O = ADP + 2 phosphate(in) + H(+). In terms of biological role, part of the ABC transporter complex PstSACB involved in phosphate import. Responsible for energy coupling to the transport system. The chain is Phosphate import ATP-binding protein PstB 1 from Ligilactobacillus salivarius (strain UCC118) (Lactobacillus salivarius).